Reading from the N-terminus, the 324-residue chain is Biotin synthase (324 aa).

The Radical SAM core domain maps to 43–273 (FCGNYFNFCS…HVFLRLAGGR (231 aa)). Positions 61, 65, and 68 each coordinate [4Fe-4S] cluster. Residues serine 105, cysteine 138, cysteine 198, and arginine 268 each coordinate [2Fe-2S] cluster.

This sequence belongs to the radical SAM superfamily. Biotin synthase family. In terms of assembly, homodimer. Requires [4Fe-4S] cluster as cofactor. [2Fe-2S] cluster is required as a cofactor.

The enzyme catalyses (4R,5S)-dethiobiotin + (sulfur carrier)-SH + 2 reduced [2Fe-2S]-[ferredoxin] + 2 S-adenosyl-L-methionine = (sulfur carrier)-H + biotin + 2 5'-deoxyadenosine + 2 L-methionine + 2 oxidized [2Fe-2S]-[ferredoxin]. It functions in the pathway cofactor biosynthesis; biotin biosynthesis; biotin from 7,8-diaminononanoate: step 2/2. Catalyzes the conversion of dethiobiotin (DTB) to biotin by the insertion of a sulfur atom into dethiobiotin via a radical-based mechanism. In Campylobacter hominis (strain ATCC BAA-381 / DSM 21671 / CCUG 45161 / LMG 19568 / NCTC 13146 / CH001A), this protein is Biotin synthase.